A 603-amino-acid polypeptide reads, in one-letter code: NAD 5'-nucleotidase (603 aa).

The N-terminal stretch at 1 to 25 is a signal peptide; it reads MLLSKKSASFALSAFAMLFTSVALA. The Zn(2+) site is built by D44, H46, D94, N126, and H227. Residues R397, R437, F456, and 540–546 each bind substrate; that span reads YVAGGKD.

The protein belongs to the 5'-nucleotidase family. It depends on Zn(2+) as a cofactor.

Its subcellular location is the periplasm. The enzyme catalyses a ribonucleoside 5'-phosphate + H2O = a ribonucleoside + phosphate. Functionally, degrades NAD into adenosine and nicotinamide riboside, the latter being subsequently internalized by a specific permease. Also endowed with NAD(P) pyrophosphatase activity. Exhibits a broad substrate specificity, recognizing either mono- or dinucleotide nicotinamides and different adenosine phosphates with a maximal activity on 5'-adenosine monophosphate. In Haemophilus influenzae (strain ATCC 51907 / DSM 11121 / KW20 / Rd), this protein is NAD 5'-nucleotidase.